The sequence spans 242 residues: 6-phosphogluconolactonase (242 aa).

It belongs to the glucosamine/galactosamine-6-phosphate isomerase family. 6-phosphogluconolactonase subfamily.

The catalysed reaction is 6-phospho-D-glucono-1,5-lactone + H2O = 6-phospho-D-gluconate + H(+). It functions in the pathway carbohydrate degradation; pentose phosphate pathway; D-ribulose 5-phosphate from D-glucose 6-phosphate (oxidative stage): step 2/3. Hydrolysis of 6-phosphogluconolactone to 6-phosphogluconate. This chain is 6-phosphogluconolactonase (pgl), found in Pseudomonas putida (Arthrobacter siderocapsulatus).